Consider the following 1206-residue polypeptide: Methionine synthase (1206 aa).

The Hcy-binding domain occupies 1–314 (MRVTAANQHQ…DHIREVAAAV (314 aa)). 3 residues coordinate Zn(2+): Cys233, Cys299, and Cys300. In terms of domain architecture, Pterin-binding spans 350–609 (VLMIGERTNA…IPEEQRQAAL (260 aa)). In terms of domain architecture, B12-binding N-terminal spans 642-735 (REAELAKLPL…HMEKSDCDFG (94 aa)). The B12-binding domain maps to 740-877 (KGRIVLATVK…SAKRGEALAP (138 aa)). Methylcob(III)alamin contacts are provided by residues 750–754 (GDVHD), His753, Ser798, and Ala856. A disordered region spans residues 873 to 925 (EALAPGSPESLAAEADRNKETERKARHERSKRIAVQRKAAEEPVEVPERSDVP). The span at 886-897 (EADRNKETERKA) shows a compositional bias: basic and acidic residues. A compositionally biased stretch (basic residues) spans 898–907 (RHERSKRIAV). The AdoMet activation domain maps to 907–1206 (VQRKAAEEPV…HHPAAKYFNV (300 aa)). Residues 910–924 (KAAEEPVEVPERSDV) are compositionally biased toward basic and acidic residues. S-adenosyl-L-methionine contacts are provided by residues Asp954, Arg1149, and 1203-1204 (YF).

Belongs to the vitamin-B12 dependent methionine synthase family. Methylcob(III)alamin serves as cofactor. The cofactor is Zn(2+).

The catalysed reaction is (6S)-5-methyl-5,6,7,8-tetrahydrofolate + L-homocysteine = (6S)-5,6,7,8-tetrahydrofolate + L-methionine. The protein operates within amino-acid biosynthesis; L-methionine biosynthesis via de novo pathway; L-methionine from L-homocysteine (MetH route): step 1/1. Catalyzes the transfer of a methyl group from methyl-cobalamin to homocysteine, yielding enzyme-bound cob(I)alamin and methionine. Subsequently, remethylates the cofactor using methyltetrahydrofolate. This Mycobacterium leprae (strain TN) protein is Methionine synthase (metH).